Here is a 170-residue protein sequence, read N- to C-terminus: Myosin regulatory light chain 1 (170 aa).

Basic residues predominate over residues 1 to 13; that stretch reads MSKAAKKKSSKKR. Positions 1 to 22 are disordered; it reads MSKAAKKKSSKKRSGSEAAQFD. EF-hand domains follow at residues 24–59 and 93–128; these read KTIQ…MGQI and DPEA…KRGE. Residues D37, N39, D41, and D48 each coordinate Ca(2+).

In terms of assembly, myosin is a hexamer of 2 heavy chains and 4 light chains (two regulatory light chains and two essential light chains).

In Caenorhabditis elegans, this protein is Myosin regulatory light chain 1 (mlc-1).